The chain runs to 544 residues: Lysophosphatidylcholine acyltransferase 2 (544 aa).

Residues 1 to 58 (MNRCAEAAAVAATVPGSGVGDAGLRPPMVPRQASFFPPPVPNPFVQQTTISASRRLQM) lie on the Cytoplasmic side of the membrane. Residues 59 to 79 (FLLGIILLPVRALLVGIILLL) form a helical; Signal-anchor for type II membrane protein membrane-spanning segment. The Lumenal portion of the chain corresponds to 80–544 (AWPFAVISTA…EEGTSDKKVD (465 aa)). The HXXXXD motif signature appears at 146-151 (HSTFFD). Residues 220 to 223 (EGTC) carry the EGTC motif motif. EF-hand domains are found at residues 391 to 426 (PVSD…LCNP) and 428 to 463 (NTEE…SLGV). Residues Asp404, Asn406, Asp408, Ser410, Glu415, Asp441, Asp443, Asp445, Tyr447, and Glu452 each contribute to the Ca(2+) site. The segment covering 520-532 (TAPSVASNKVSPE) has biased composition (polar residues). The disordered stretch occupies residues 520-544 (TAPSVASNKVSPESQEEGTSDKKVD).

It belongs to the 1-acyl-sn-glycerol-3-phosphate acyltransferase family. As to expression, highest expression is found in resident macrophages and casein-induced neutrophils followed by skin, colon, spleen and thioglycollate-induced macrophages. Detected in erythroleukemic cells but not in reticulocytes.

The protein localises to the endoplasmic reticulum membrane. It localises to the golgi apparatus membrane. It is found in the cell membrane. Its subcellular location is the lipid droplet. It catalyses the reaction a 1-acyl-sn-glycero-3-phosphocholine + an acyl-CoA = a 1,2-diacyl-sn-glycero-3-phosphocholine + CoA. The enzyme catalyses a 1-O-alkyl-sn-glycero-3-phosphocholine + acetyl-CoA = a 1-O-alkyl-2-acetyl-sn-glycero-3-phosphocholine + CoA. The catalysed reaction is a 1-acyl-sn-glycero-3-phosphate + an acyl-CoA = a 1,2-diacyl-sn-glycero-3-phosphate + CoA. It carries out the reaction a 1-O-(1Z-alkenyl)-sn-glycero-3-phosphocholine + an acyl-CoA = a 1-O-(1Z-alkenyl)-2-acyl-sn-glycero-3-phosphocholine + CoA. It catalyses the reaction 1-O-octadecyl-sn-glycero-3-phosphocholine + acetyl-CoA = 1-O-octadecyl-2-acetyl-sn-glycero-3-phosphocholine + CoA. The enzyme catalyses 1-hexadecanoyl-sn-glycero-3-phosphocholine + acetyl-CoA = 1-hexadecanoyl-2-acetyl-sn-glycero-3-phosphocholine + CoA. The catalysed reaction is 1-octadecanoyl-sn-glycero-3-phosphocholine + acetyl-CoA = 1-octadecanoyl-2-acetyl-sn-glycero-3-phosphocholine + CoA. It carries out the reaction a 1-O-(1Z-alkenyl)-sn-glycero-3-phosphocholine + acetyl-CoA = 1-O-(1Z)-alkenyl-2-acetyl-sn-glycero-3-phosphocholine + CoA. It catalyses the reaction 1-O-hexadecyl-sn-glycero-3-phosphocholine + acetyl-CoA = 1-O-hexadecyl-2-acetyl-sn-glycero-3-phosphocholine + CoA. The enzyme catalyses 1-O-octadecyl-sn-glycero-3-phosphocholine + (5Z,8Z,11Z,14Z)-eicosatetraenoyl-CoA = 1-O-octadecyl-2-(5Z,8Z,11Z,14Z)-eicosatetraenoyl-sn-glycero-3-phosphocholine + CoA. The catalysed reaction is 1-hexadecanoyl-sn-glycero-3-phosphate + (9Z)-octadecenoyl-CoA = 1-hexadecanoyl-2-(9Z-octadecenoyl)-sn-glycero-3-phosphate + CoA. It carries out the reaction 1-(9Z-octadecenoyl)-sn-glycero-3-phosphate + (9Z)-octadecenoyl-CoA = 1,2-di-(9Z-octadecenoyl)-sn-glycero-3-phosphate + CoA. It catalyses the reaction 1-(9Z-octadecenoyl)-sn-glycero-3-phosphate + hexadecanoyl-CoA = 1-(9Z)-octadecenoyl-2-hexadecanoyl-sn-glycero-3-phosphate + CoA. The enzyme catalyses 1-heptadecanoyl-sn-glycero-3-phosphate + (9Z)-octadecenoyl-CoA = 1-heptadecanoyl-2-(9Z)-octadecenoyl-sn-glycero-3-phosphate + CoA. The catalysed reaction is 1-octadecanoyl-sn-glycero-3-phosphate + (9Z)-octadecenoyl-CoA = 1-octadecanoyl-2-(9Z-octadecenoyl)-sn-glycero-3-phosphate + CoA. It carries out the reaction heptadecanoyl-CoA + 1-(9Z-octadecenoyl)-sn-glycero-3-phosphate = 1-(9Z)-octadecenoyl-2-heptadecanoyl-sn-glycero-3-phosphate + CoA. It catalyses the reaction 1-(9Z-octadecenoyl)-sn-glycero-3-phosphate + (9Z,12Z)-octadecadienoyl-CoA = 1-(9Z)-octadecenoyl-2-(9Z,12Z)-octadecadienoyl-sn-glycero-3-phosphate + CoA. The enzyme catalyses 1-(9Z-octadecenoyl)-sn-glycero-3-phosphate + tetradecanoyl-CoA = 1-(9Z)-octadecenoyl-2-tetradecanoyl-sn-glycero-3-phosphate + CoA. The catalysed reaction is pentadecanoyl-CoA + 1-(9Z-octadecenoyl)-sn-glycero-3-phosphate = 1-(9Z)-octadecenoyl-2-pentadecanoyl-sn-glycero-3-phosphate + CoA. It carries out the reaction nonadecanoyl-CoA + 1-(9Z-octadecenoyl)-sn-glycero-3-phosphate = 1-(9Z)-octadecenoyl-2-nonadecanoyl-sn-glycero-3-phosphate + CoA. It catalyses the reaction 1-hexadecanoyl-sn-glycero-3-phosphocholine + (9Z)-octadecenoyl-CoA = 1-hexadecanoyl-2-(9Z-octadecenoyl)-sn-glycero-3-phosphocholine + CoA. The protein operates within lipid metabolism; phospholipid metabolism. Its activity is regulated as follows. Acetyltransferase activity is increased following acute inflammatory stimulation by lipopolysaccharide (LPS). Acyltransferase activity is unchanged. Its function is as follows. Exhibits both acyltransferase and acetyltransferase activities. Activity is calcium-dependent. Catalyzes the conversion of lysophosphatidylcholine (1-acyl-sn-glycero-3-phosphocholine or LPC) into phosphatidylcholine (1,2-diacyl-sn-glycero-3-phosphocholine or PC). Catalyzes the conversion 1-acyl-sn-glycerol-3-phosphate (lysophosphatidic acid or LPA) into 1,2-diacyl-sn-glycerol-3-phosphate (phosphatidic acid or PA) by incorporating an acyl moiety at the sn-2 position of the glycerol backbone. Involved in platelet-activating factor (PAF) biosynthesis by catalyzing the conversion of the PAF precursor, 1-O-alkyl-sn-glycero-3-phosphocholine (lyso-PAF) into 1-O-alkyl-2-acetyl-sn-glycero-3-phosphocholine (PAF). Also converts lyso-PAF to 1-O-alkyl-2-acyl-sn-glycero-3-phosphocholine (PC), a major component of cell membranes and a PAF precursor. Under resting conditions, acyltransferase activity is preferred. Upon acute inflammatory stimulus, acetyltransferase activity is enhanced and PAF synthesis increases. Involved in the regulation of lipid droplet number and size. This chain is Lysophosphatidylcholine acyltransferase 2 (Lpcat2), found in Mus musculus (Mouse).